The following is a 574-amino-acid chain: Probable cytochrome c oxidase subunit 1 (574 aa).

Residues 40–60 traverse the membrane as a helical segment; sequence IGIMYCVACFIFFFVGGLLAL. H86 is a Fe(II)-heme a binding site. 6 consecutive transmembrane segments (helical) span residues 89–109, 121–141, 170–190, 213–233, 258–278, and 290–310; these read IMLLFYATPIVFGFANLVLPL, LNAFSFWLFLFGAAIGMAGFI, LWIMGLIVAGLGTILGAVNMI, ILVTSILVLIAFPLLTAALFG, LFWFFGHPEVYIIALPFFGIV, and IFGYTTLVYATLSIAALSVAV. 2 residues coordinate Cu cation: H264 and Y268. Positions 264–268 form a cross-link, 1'-histidyl-3'-tyrosine (His-Tyr); it reads HPEVY. Residues H313 and H314 each contribute to the Cu cation site. 2 helical membrane passes run 315–335 and 359–379; these read MFATGAVLLPFFSFMTYLIAV and MLFSVGFAVTFLLGGLTGVLL. Heme a3 is bound at residue H397. A run of 3 helical transmembrane segments spans residues 398–418, 433–453, and 476–496; these read FHYVLFGTIVFSTFAGIYFWF, LHFWLTFIGFHTTFLVQHWLG, and VSTIGSFILGASMFPFVWNVF. H399 is a binding site for Fe(II)-heme a.

This sequence belongs to the heme-copper respiratory oxidase family. As to quaternary structure, associates with subunits II, III and IV to form cytochrome c oxidase. Requires Cu(2+) as cofactor. Heme is required as a cofactor.

The protein resides in the cell membrane. The catalysed reaction is 4 Fe(II)-[cytochrome c] + O2 + 8 H(+)(in) = 4 Fe(III)-[cytochrome c] + 2 H2O + 4 H(+)(out). It functions in the pathway energy metabolism; oxidative phosphorylation. Cytochrome c oxidase is the component of the respiratory chain that catalyzes the reduction of oxygen to water. Subunits 1-3 form the functional core of the enzyme complex. CO I is the catalytic subunit of the enzyme. Electrons originating in cytochrome c are transferred via the copper A center of subunit 2 and heme A of subunit 1 to the bimetallic center formed by heme A3 and copper B. This Mycobacterium leprae (strain TN) protein is Probable cytochrome c oxidase subunit 1 (ctaD).